A 688-amino-acid polypeptide reads, in one-letter code: MAKNFLIELGTEELPPTALRSLAEAFASNFEAGLKTAELSHEGIKWYAAPRRLALKVTALAEGQADKVVEKRGPAISVAFDAEGNATKAAQGWARGNGITVEQADRLKTDKGEWLLFKQEVAGKPVQELVMDIAAKALAGLPIPKAMRWGNSDIQFIRPVKTLTVLLGDELVEGKILGVASARTIRGHRFMGEQEFTIDSADQYPAILEERGKVMADYDARKAIILADAKKAADAVGGIADLEDDLVEEVTSLVEWPVVLTAKFEQVFLKVPSEALVYTMKGDQKYFPVYDADKNLLPNFIFVSNIESKEPRHVIEGNEKVVRPRLADAEFFFNTDRKRPLIDRLAELDQAIFQKQLGTIKDKTDRITELAGYIAEQIDADVEKSKRAGLLAKCDLMTSMVFEFTDTQGVMGMHYATHDGEDEQVALALYEQYMPRFAGDTLPSTGISSAVAMADKLDTIVGIFGIGQAPKGSDPFALRRASLGVLRIIVENGYNLDLTDLIGKAKELLGDKLTNENVEADVIDFMLGRFRAWYQDAGFSVDIIQAVLARRPTKPADFDQRVKAVSHFRELEAAEALAAANKRVGNILAKFDGELPAEIDLALLQEDAEKALAENVEVMTEALEPAFATGNYQEALSKLADLREPVDAFFDNVMVMADDEALKKNRLTLLNNLRNLFLQIADISLLQK.

This sequence belongs to the class-II aminoacyl-tRNA synthetase family. Tetramer of two alpha and two beta subunits.

The protein resides in the cytoplasm. It catalyses the reaction tRNA(Gly) + glycine + ATP = glycyl-tRNA(Gly) + AMP + diphosphate. The polypeptide is Glycine--tRNA ligase beta subunit (Vibrio atlanticus (strain LGP32) (Vibrio splendidus (strain Mel32))).